Consider the following 373-residue polypeptide: Probable protein phosphatase 2C 73 (373 aa).

The region spanning 61 to 354 (LASLFSKRGE…DDMSVVCLFL (294 aa)) is the PPM-type phosphatase domain. Asp97, Gly98, Asp299, and Asp345 together coordinate Mn(2+).

The protein belongs to the PP2C family. Mg(2+) serves as cofactor. The cofactor is Mn(2+).

It catalyses the reaction O-phospho-L-seryl-[protein] + H2O = L-seryl-[protein] + phosphate. It carries out the reaction O-phospho-L-threonyl-[protein] + H2O = L-threonyl-[protein] + phosphate. The polypeptide is Probable protein phosphatase 2C 73 (PPC6-7) (Arabidopsis thaliana (Mouse-ear cress)).